Consider the following 208-residue polypeptide: MKGLFVTIEGPEGSGKTTLIKSLLPYFEQKEQKVMATREPGGIAISEDIRTILHKQEYTMMEARTEALLYAAARRQHLVEKVMPALEENYLVLCDRFIDSSLAYQGYARGLGMDKVFEINRFATEDCMPSLTIYLDIEPEVGLARIGKDAGREVNRLDMEDISFHKRVREGYLQVVERFSNRIVLVNADQPMKKLIEEVVQIIEDKLL.

10–17 (GPEGSGKT) lines the ATP pocket.

Belongs to the thymidylate kinase family.

The catalysed reaction is dTMP + ATP = dTDP + ADP. In terms of biological role, phosphorylation of dTMP to form dTDP in both de novo and salvage pathways of dTTP synthesis. This Bacillus mycoides (strain KBAB4) (Bacillus weihenstephanensis) protein is Thymidylate kinase.